The chain runs to 345 residues: Heat-inducible transcription repressor HrcA (345 aa).

Belongs to the HrcA family.

Its function is as follows. Negative regulator of class I heat shock genes (grpE-dnaK-dnaJ and groELS operons). Prevents heat-shock induction of these operons. This is Heat-inducible transcription repressor HrcA from Zymomonas mobilis subsp. mobilis (strain ATCC 31821 / ZM4 / CP4).